Here is a 353-residue protein sequence, read N- to C-terminus: Mitochondrial ubiquitin ligase activator of nfkb 1 (353 aa).

At 1–8 (MENGGRPS) the chain is on the cytoplasmic side. Residues 9–29 (VGQVILLTTSSAITALFYSIY) form a helical membrane-spanning segment. Residues 30 to 239 (RHKYRSVQTL…LLEKQEVQMR (210 aa)) lie on the Mitochondrial intermembrane side of the membrane. Residues 240-260 (WWRILSIVFGVASCITLFFIL) traverse the membrane as a helical segment. Residues 261–353 (RRKYRHYKEK…IDRIVPLYNS (93 aa)) lie on the Cytoplasmic side of the membrane. An RING-type zinc finger spans residues 303 to 341 (CSICLSTEKSCVFLECGHVCSCISCYQALPSPKKCPICR).

In terms of assembly, homooligomer.

The protein localises to the mitochondrion outer membrane. It catalyses the reaction S-ubiquitinyl-[E2 ubiquitin-conjugating enzyme]-L-cysteine + [acceptor protein]-L-lysine = [E2 ubiquitin-conjugating enzyme]-L-cysteine + N(6)-ubiquitinyl-[acceptor protein]-L-lysine.. Its pathway is protein modification; protein ubiquitination. Its function is as follows. E3 ubiquitin-protein ligase that plays a role in the control of mitochondrial morphology. Promotes mitochondrial fragmentation and influences mitochondrial localization. Inhibits cell growth. E3 ubiquitin ligases accept ubiquitin from an E2 ubiquitin-conjugating enzyme in the form of a thioester and then directly transfer the ubiquitin to targeted substrates. The polypeptide is Mitochondrial ubiquitin ligase activator of nfkb 1 (mul1) (Xenopus laevis (African clawed frog)).